The following is a 291-amino-acid chain: Small ribosomal subunit biogenesis GTPase RsgA (291 aa).

Residues 63-221 (KNEIKRPPVS…IADTPGFSAL (159 aa)) form the CP-type G domain. GTP-binding positions include 112–115 (TKKD) and 164–172 (GQSGVGKST). 4 residues coordinate Zn(2+): C245, C250, H252, and C258.

This sequence belongs to the TRAFAC class YlqF/YawG GTPase family. RsgA subfamily. As to quaternary structure, monomer. Associates with 30S ribosomal subunit, binds 16S rRNA. Requires Zn(2+) as cofactor.

The protein resides in the cytoplasm. Functionally, one of several proteins that assist in the late maturation steps of the functional core of the 30S ribosomal subunit. Helps release RbfA from mature subunits. May play a role in the assembly of ribosomal proteins into the subunit. Circularly permuted GTPase that catalyzes slow GTP hydrolysis, GTPase activity is stimulated by the 30S ribosomal subunit. This is Small ribosomal subunit biogenesis GTPase RsgA from Staphylococcus saprophyticus subsp. saprophyticus (strain ATCC 15305 / DSM 20229 / NCIMB 8711 / NCTC 7292 / S-41).